A 288-amino-acid chain; its full sequence is Bifunctional protein FolD (288 aa).

Residues 166–168 (GRS), S191, and V232 contribute to the NADP(+) site.

The protein belongs to the tetrahydrofolate dehydrogenase/cyclohydrolase family. As to quaternary structure, homodimer.

It carries out the reaction (6R)-5,10-methylene-5,6,7,8-tetrahydrofolate + NADP(+) = (6R)-5,10-methenyltetrahydrofolate + NADPH. The catalysed reaction is (6R)-5,10-methenyltetrahydrofolate + H2O = (6R)-10-formyltetrahydrofolate + H(+). Its pathway is one-carbon metabolism; tetrahydrofolate interconversion. Catalyzes the oxidation of 5,10-methylenetetrahydrofolate to 5,10-methenyltetrahydrofolate and then the hydrolysis of 5,10-methenyltetrahydrofolate to 10-formyltetrahydrofolate. The protein is Bifunctional protein FolD of Roseiflexus sp. (strain RS-1).